Here is a 275-residue protein sequence, read N- to C-terminus: Centromere protein V (275 aa).

Composition is skewed to low complexity over residues 1 to 10 (MRRSRSSAAA) and 17 to 51 (RSGA…QAGS). Residues 1–109 (MRRSRSSAAA…ATPTSSASNL (109 aa)) form a disordered region. 2 positions are modified to phosphoserine: Ser18 and Ser21. Arg43 is subject to Omega-N-methylarginine. A compositionally biased stretch (pro residues) spans 79 to 100 (GEPPPPELALLPPPPPPPPTPA). 3 positions are modified to phosphothreonine: Thr98, Thr101, and Thr103. The CENP-V/GFA domain maps to 148 to 260 (HTGGCHCGAV…TEEFNGSDWE (113 aa)). The Zn(2+) site is built by Cys152, Cys154, Cys172, Cys174, Cys177, Cys216, and Cys219. A Phosphoserine modification is found at Ser257.

The protein belongs to the Gfa family. It depends on Zn(2+) as a cofactor.

It localises to the chromosome. Its subcellular location is the centromere. It is found in the kinetochore. The protein resides in the nucleus. The protein localises to the cytoplasm. It localises to the cytoskeleton. Its subcellular location is the spindle. Its function is as follows. Required for distribution of pericentromeric heterochromatin in interphase nuclei and for centromere formation and organization, chromosome alignment and cytokinesis. This is Centromere protein V (CENPV) from Homo sapiens (Human).